Here is a 1495-residue protein sequence, read N- to C-terminus: Pregnancy zone protein (1495 aa).

Residues 1–24 form the signal peptide; sequence MRRNQLPTPAFLLLFLLLPRDATT. Cys48 and Cys86 are joined by a disulfide. Asn55 and Asn157 each carry an N-linked (GlcNAc...) asparagine glycan. 2 disulfides stabilise this stretch: Cys249–Cys298 and Cys267–Cys286. Asn382, Asn405, and Asn412 each carry an N-linked (GlcNAc...) asparagine glycan. Cys469 and Cys562 are joined by a disulfide. The N-linked (GlcNAc...) asparagine glycan is linked to Asn568. 6 disulfide bridges follow: Cys594-Cys783, Cys642-Cys689, Cys833-Cys861, Cys859-Cys895, Cys933-Cys1339, and Cys1092-Cys1140. The tract at residues 686–744 is bait region; it reads PRFCQEFQHYPAMGGVAPQALAVAASGPGSSFRAMGVPMMGLDYSDEINQVVEVRETVR. Asn881 and Asn942 each carry an N-linked (GlcNAc...) asparagine glycan. The isoglutamyl cysteine thioester (Cys-Gln) cross-link spans 984–987; the sequence is CGEQ. N-linked (GlcNAc...) asparagine glycosylation is present at Asn1003. Asn1385 and Asn1443 each carry an N-linked (GlcNAc...) asparagine glycan.

This sequence belongs to the protease inhibitor I39 (alpha-2-macroglobulin) family. In terms of tissue distribution, highest expression in liver, medium expression in ovary, heart and stomach. Low expression in lung, kidney and uterus. Protein found in plasma.

The protein localises to the secreted. Is able to inhibit all four classes of proteinases by a unique 'trapping' mechanism. This protein has a peptide stretch, called the 'bait region' which contains specific cleavage sites for different proteinases. When a proteinase cleaves the bait region, a conformational change is induced in the protein which traps the proteinase. The entrapped enzyme remains active against low molecular weight substrates (activity against high molecular weight substrates is greatly reduced). Following cleavage in the bait region, a thioester bond is hydrolyzed and mediates the covalent binding of the protein to the proteinase. The protein is Pregnancy zone protein (Pzp) of Mus musculus (Mouse).